Reading from the N-terminus, the 252-residue chain is ATP synthase subunit a (252 aa).

Helical transmembrane passes span 29-49 (FTNV…FLFI), 87-107 (FFPL…IGLF), 117-137 (IMIT…YGFY), 146-166 (LFVP…IEVI), 196-216 (FIVS…LPLI), and 219-239 (VAIT…FTVL).

The protein belongs to the ATPase A chain family. As to quaternary structure, F-type ATPases have 2 components, CF(1) - the catalytic core - and CF(0) - the membrane proton channel. CF(1) has five subunits: alpha(3), beta(3), gamma(1), delta(1), epsilon(1). CF(0) has three main subunits: a(1), b(2) and c(9-12). The alpha and beta chains form an alternating ring which encloses part of the gamma chain. CF(1) is attached to CF(0) by a central stalk formed by the gamma and epsilon chains, while a peripheral stalk is formed by the delta and b chains.

The protein localises to the cell inner membrane. In terms of biological role, key component of the proton channel; it plays a direct role in the translocation of protons across the membrane. In Bartonella henselae (strain ATCC 49882 / DSM 28221 / CCUG 30454 / Houston 1) (Rochalimaea henselae), this protein is ATP synthase subunit a.